We begin with the raw amino-acid sequence, 147 residues long: Hemoglobin subunit beta-1 (147 aa).

S2 is modified (N-acetylserine). The region spanning 3–147 is the Globin domain; that stretch reads FLSAEEKGLV…VASALAHRYH (145 aa). At K18 the chain carries N6-succinyllysine. Phosphoserine occurs at positions 45 and 51. An N6-succinyllysine modification is found at K60. Heme b-binding residues include H64 and H93. R105 is modified (asymmetric dimethylarginine).

This sequence belongs to the globin family. Heterotetramer of two alpha chains and two beta chains. Red blood cells.

Involved in oxygen transport from the lung to the various peripheral tissues. The polypeptide is Hemoglobin subunit beta-1 (HBB1) (Panthera onca (Jaguar)).